The sequence spans 134 residues: Syncollin (134 aa).

Residues 1-21 form the signal peptide; that stretch reads MSPLRPLLLALALASVPCAQG.

As to quaternary structure, monomer and homooligomer; most probably hexameric. Interacts with GP2. In terms of processing, contains intrachain disulfide bonds.

The protein localises to the zymogen granule membrane. The protein resides in the zymogen granule lumen. In terms of biological role, functions in exocytosis in pancreatic acinar cells regulating the fusion of zymogen granules with each other. May have a pore-forming activity on membranes and regulate exocytosis in other exocrine tissues. The sequence is that of Syncollin (SYCN) from Homo sapiens (Human).